Consider the following 200-residue polypeptide: Small ribosomal subunit protein uS4 (200 aa).

The interval 22-43 (TGKELERRPYAPGQHGPTQRKK) is disordered. In terms of domain architecture, S4 RNA-binding spans 92–170 (QRLDNIVYRL…VPEYVTFDAE (79 aa)).

It belongs to the universal ribosomal protein uS4 family. Part of the 30S ribosomal subunit. Contacts protein S5. The interaction surface between S4 and S5 is involved in control of translational fidelity.

One of the primary rRNA binding proteins, it binds directly to 16S rRNA where it nucleates assembly of the body of the 30S subunit. Functionally, with S5 and S12 plays an important role in translational accuracy. This Listeria monocytogenes serovar 1/2a (strain ATCC BAA-679 / EGD-e) protein is Small ribosomal subunit protein uS4.